A 265-amino-acid chain; its full sequence is 5'-nucleotidase SurE (265 aa).

A divalent metal cation-binding residues include D8, D9, S40, and N98.

Belongs to the SurE nucleotidase family. It depends on a divalent metal cation as a cofactor.

It localises to the cytoplasm. It catalyses the reaction a ribonucleoside 5'-phosphate + H2O = a ribonucleoside + phosphate. Its function is as follows. Nucleotidase that shows phosphatase activity on nucleoside 5'-monophosphates. The protein is 5'-nucleotidase SurE of Nostoc sp. (strain PCC 7120 / SAG 25.82 / UTEX 2576).